The following is a 316-amino-acid chain: Ubiquinol oxidase, mitochondrial (316 aa).

The transit peptide at 1–26 directs the protein to the mitochondrion; it reads MGVRAQPLLARSLITTTQPWILSARS. The chain crosses the membrane as a helical span at residues 124 to 144; sequence VHRAVVLETVAAVPGMVAGML. 3 residues coordinate Fe cation: glutamate 131, glutamate 170, and histidine 173. The helical transmembrane segment at 189-209 threads the bilayer; the sequence is MLVALVQTLFFNVYFLAYMLF. 3 residues coordinate Fe cation: glutamate 221, glutamate 272, and histidine 275.

It belongs to the alternative oxidase family. Fe cation is required as a cofactor.

It localises to the mitochondrion inner membrane. It carries out the reaction 2 a ubiquinol + O2 = 2 a ubiquinone + 2 H2O. Functionally, alternative oxidase which function may be to reoxidize reducing equivalents produced by glycolysis such as ubiquinol. This is Ubiquinol oxidase, mitochondrial (AOX) from Batrachochytrium dendrobatidis (strain JAM81 / FGSC 10211) (Frog chytrid fungus).